The chain runs to 66 residues: Large ribosomal subunit protein bL35 (66 aa).

A compositionally biased stretch (basic residues) spans 1–16; the sequence is MPKQKTHRASAKRFKR. The tract at residues 1–21 is disordered; it reads MPKQKTHRASAKRFKRTGSGG.

It belongs to the bacterial ribosomal protein bL35 family.

This Streptococcus mutans serotype c (strain ATCC 700610 / UA159) protein is Large ribosomal subunit protein bL35.